Here is a 74-residue protein sequence, read N- to C-terminus: Translational regulator CsrA (74 aa).

This sequence belongs to the CsrA/RsmA family. As to quaternary structure, homodimer. The beta-strands of each monomer intercalate to form a hydrophobic core while the alpha-helices form wings that extend away from the core. Two molecules of FliW interact with 1 homodimer. mRNA and FliW bind to different sites on CsrA.

Its subcellular location is the cytoplasm. A translational regulator that binds mRNA to regulate translation initiation and/or mRNA stability. Usually binds in the 5'-UTR at or near the Shine-Dalgarno sequence preventing ribosome-binding, thus repressing translation. Represses expression of flagellin (hag) in a post-transcriptional fashion. Specifically binds to 2 sites in the 5'-UTR of hag mRNA in a cooperative fashion; the second site overlaps the Shine-Dalgarno sequence and prevents 30S ribosomal subunit binding. Mutation of either binding site abolishes CsrA regulation of hag expression. Repression is greater in the 1A96 than 168 genetic background and higher in minimal than rich medium. Translation repression is antagonized by FliW. Partner switching by flagellin between FliW and CsrA provides a flagellar assembly checkpoint to tightly control the timing of flagellin synthesis. Flagellin binds to assembly factor FliW, freeing CsrA to repress translation of the flagellin mRNA. When the flagellar hook is assembled flagellin is secreted, depleting intracellular flagellin, which frees FliW to interact with CsrA and inhibits CsrA binding to mRNA. This derepresses flagellin translation and provides protein for flagellar assembly. Once the flagellar filament is completed cytoplasmic flagellin levels rise and CsrA translation repression of flagellin reinitiates. Overexpression leads to a dramatic reduction in motility, a significant reduction in flagellin synthesis and reduced flagella assembly. The polypeptide is Translational regulator CsrA (Bacillus subtilis (strain 168)).